A 183-amino-acid chain; its full sequence is MKKKTTLSEEDQALFRQLMAGTRKIKQDTIVHRPQRKKISEVPVKRLIPEQADASHYFSDEFQPLLNTEGPVKYVRPDVSHFEAKKLRRGDYSPELFLDLHGLTQLQAKQELGALIAACRREHVFCACVMHGHGKHILKQQTPLWLAQHPHVMAFHQAPKEYGGDAALLVLIEVEEWLPPELP.

Residues 98-173 (LDLHGLTQLQ…GDAALLVLIE (76 aa)) enclose the Smr domain.

It belongs to the SmrB family. As to quaternary structure, associates with collided ribosomes, but not with correctly translating polysomes.

In terms of biological role, acts as a ribosome collision sensor. Detects stalled/collided disomes (pairs of ribosomes where the leading ribosome is stalled and a second ribosome has collided with it) and endonucleolytically cleaves mRNA at the 5' boundary of the stalled ribosome. Stalled/collided disomes form a new interface (primarily via the 30S subunits) that binds SmrB. Cleaved mRNA becomes available for tmRNA ligation, leading to ribosomal subunit dissociation and rescue of stalled ribosomes. This is Ribosome rescue factor SmrB from Shigella sonnei (strain Ss046).